A 402-amino-acid chain; its full sequence is Zinc finger CCHC domain-containing protein 12 (402 aa).

The tract at residues 1 to 20 (MASILSRLGSSRGQNSPLPP) is disordered. Residues 346–363 (IHCSHCGEEGHSKETCDN) form a CCHC-type zinc finger. Positions 383–402 (HAEERARGAPGEPIGLSEPQ) are disordered.

This sequence belongs to the ZCCHC12 family. Interacts with SMAD1 and CREB-binding protein (CBP). Forms a protein-DNA complex through its association with SMAD1. As to expression, in embryonic brains expression is restricted to the ventral region of the forebrain, including the septum, amygdala, caudal putamen, and in the basal-forebrain cholinergic neurons. In adults, expressed in the brain, and at low levels in the testis.

Functionally, transcriptional coactivator in the bone morphogenetic protein (BMP)-signaling pathway. It positively modulates BMP signaling by interacting with SMAD1 and associating with CBP in the transcription complex. It contributes to the BMP-induced enhancement of cholinergic-neuron-specific gene expression. The polypeptide is Zinc finger CCHC domain-containing protein 12 (Zcchc12) (Mus musculus (Mouse)).